Reading from the N-terminus, the 278-residue chain is Asnovolin E/Chermesin D methyltransferase nvfJ (278 aa).

Residues 125–126 (DL), 152–153 (NI), and 153–154 (IL) each bind S-adenosyl-L-methionine.

Belongs to the class I-like SAM-binding methyltransferase superfamily. Homodimer.

The enzyme catalyses chermesin D + S-adenosyl-L-methionine = chermesin D methyl ester + S-adenosyl-L-homocysteine. It carries out the reaction asnovolin I + S-adenosyl-L-methionine = asnovolin K + S-adenosyl-L-homocysteine. It participates in secondary metabolite biosynthesis; terpenoid biosynthesis. Functionally, methyltransferase; part of the gene cluster that mediates the biosynthesis of novofumigatonin, a heavily oxygenated meroterpenoid containing a unique orthoester moiety. The first step of the pathway is the synthesis of 3,5-dimethylorsellinic acid (DMOA) by the polyketide synthase nvfA via condensation of one acetyl-CoA starter unit with 3 malonyl-CoA units and 2 methylations. DMOA is then converted to farnesyl-DMOA by the farnesyltransferase nvfB. Epoxydation by FAD-dependent monooxygenase nvfK, followed by a protonation-initiated cyclization catalyzed by the terpene cyclase nvfL leads to the production of asnavolin H. The short chain dehydrogenase nvfC then as a 3-OH dehydrogenase of asnovolin H to yield chemesin D. There are two branches to synthesize asnovolin A from chemesin D. In one branch, chemesin D undergoes Baeyer-Villiger oxidation by nvfH, methylation by nvfJ, and enoyl reduction by the nvfM D enoylreductase that reduces the double bond between C-5'and C-6', to form respectively asnovolin I, asnovolin K, and asnovolin A. In the other branch, the methylation precedes the Baeyer-Villiger oxidation and the enoyl reduction to yield asnovolin A via the asnovolin J intermediate. Asnovolin A is further converted to fumigatonoid A by the Fe(II)/2-oxoglutarate-dependent dioxygenase nvfI that catalyzes an endoperoxidation reaction. The alpha/beta hydrolase nvfD then acts as an epimerase that converts fumigatonoid A to its C-5' epimer, which then undergoes spontaneous or nvfD-catalyzed lactonization. The following step utilizes the ketoreductase nvfG to produce fumigatonoid B. The dioxygenase nvfE further converts fumigatonoid B into fumigatonoid C. Finally the Fe(II)/2-oxoglutarate-dependent dioxygenase nvfF catalyzes two rounds of oxidation to transform fumigatonoid C into the end product, novofumigatonin A. This Aspergillus novofumigatus (strain IBT 16806) protein is Asnovolin E/Chermesin D methyltransferase nvfJ.